We begin with the raw amino-acid sequence, 907 residues long: Leucine-rich repeat-containing G-protein coupled receptor 5 (907 aa).

Positions 1 to 21 (MDTSRVRMLLSLLALLQLVAA) are cleaved as a signal peptide. The Extracellular portion of the chain corresponds to 22-561 (GSPPRPDTMP…EHLFGSWLIR (540 aa)). Positions 33–64 (GCPSYCHCELDGRMLLRVDCSDLGLSELPSNL) constitute an LRRNT domain. Disulfide bonds link Cys-34/Cys-40 and Cys-38/Cys-52. LRR repeat units lie at residues 44-64 (GRML…PSNL), 65-88 (SVFT…LLHR), 89-112 (LRFL…AFAG), 114-136 (HSLK…ALQN), 137-160 (LRSL…CFSG), 162-184 (HSLR…AFRS), 186-208 (SALQ…AFGN), 209-232 (LSSL…CFDG), 233-256 (LHSL…IKTL), 257-279 (SNLK…AFVG), 281-303 (PSLI…AFQH), 304-327 (LPEL…LTGT), 328-350 (ATLE…VCDQ), 351-375 (LPNL…GCQK), 377-396 (QKID…TFQQ), 397-420 (LFNL…AFST), and 422-444 (PSLI…GLHG). 2 N-linked (GlcNAc...) asparagine glycosylation sites follow: Asn-63 and Asn-77. A glycan (N-linked (GlcNAc...) asparagine) is linked at Asn-208. Cysteines 348 and 373 form a disulfide. A disulfide bridge connects residues Cys-479 and Cys-541. The chain crosses the membrane as a helical span at residues 562 to 582 (IGVWTTAVLALSCNALVAFTV). An LRR 18 repeat occupies 564–585 (VWTTAVLALSCNALVAFTVFRT). At 583-595 (FRTPLYISSIKLL) the chain is on the cytoplasmic side. Residues 596 to 616 (IGVIAVVDILMGVSSAILAVV) traverse the membrane as a helical segment. The Extracellular segment spans residues 617–638 (DTFTFGSFAQHGAWWEGGIGCQ). Cys-637 and Cys-712 form a disulfide bridge. The chain crosses the membrane as a helical span at residues 639–659 (IVGFLSIFASESSVFLLTLAA). At 660-682 (LERGFSVKCSSKFEMKAPLSSLK) the chain is on the cytoplasmic side. A helical membrane pass occupies residues 683–703 (AIILLCVLLALTIATVPLLGG). The Extracellular segment spans residues 704–723 (SEYNASPLCLPLPFGEPSTT). The helical transmembrane segment at 724-744 (GYMVALVLLNSLCFLIMTIAY) threads the bilayer. The Cytoplasmic portion of the chain corresponds to 745–775 (TRLYCSLEKGELENLWDCSMVKHTALLLFTN). Residues 776–796 (CILYCPVAFLSFSSLLNLTFI) traverse the membrane as a helical segment. At 797-802 (SPEVIK) the chain is on the extracellular side. The helical transmembrane segment at 803-823 (FILLVIVPLPACLNPLLYIVF) threads the bilayer. At 824–907 (NPHFKEDMGS…LSSVAFVPCL (84 aa)) the chain is on the cytoplasmic side.

It belongs to the G-protein coupled receptor 1 family. As to quaternary structure, identified in a complex composed of RNF43, LGR5 and RSPO1. Also interacts with other R-spondin ligands, including RSPO2, RSPO3 and RSPO4.

The protein resides in the cell membrane. The protein localises to the golgi apparatus. Its subcellular location is the trans-Golgi network membrane. In terms of biological role, receptor for R-spondins that potentiates the canonical Wnt signaling pathway and acts as a stem cell marker of the intestinal epithelium and the hair follicle. Upon binding to R-spondins (RSPO1, RSPO2, RSPO3 or RSPO4), associates with phosphorylated LRP6 and frizzled receptors that are activated by extracellular Wnt receptors, triggering the canonical Wnt signaling pathway to increase expression of target genes. In contrast to classical G-protein coupled receptors, does not activate heterotrimeric G-proteins to transduce the signal. Involved in the development and/or maintenance of the adult intestinal stem cells during postembryonic development. This chain is Leucine-rich repeat-containing G-protein coupled receptor 5 (Lgr5), found in Rattus norvegicus (Rat).